We begin with the raw amino-acid sequence, 119 residues long: Large ribosomal subunit protein uL24 (119 aa).

This sequence belongs to the universal ribosomal protein uL24 family. Part of the 50S ribosomal subunit.

Its function is as follows. One of two assembly initiator proteins, it binds directly to the 5'-end of the 23S rRNA, where it nucleates assembly of the 50S subunit. In terms of biological role, located at the polypeptide exit tunnel on the outside of the subunit. The polypeptide is Large ribosomal subunit protein uL24 (Haloquadratum walsbyi (strain DSM 16790 / HBSQ001)).